A 211-amino-acid chain; its full sequence is Uracil phosphoribosyltransferase (211 aa).

5-phospho-alpha-D-ribose 1-diphosphate is bound by residues R81, R106, and 133–141 (DPMLATGNS). Uracil is bound by residues I196 and 201-203 (GDA). D202 serves as a coordination point for 5-phospho-alpha-D-ribose 1-diphosphate.

This sequence belongs to the UPRTase family. Requires Mg(2+) as cofactor.

The enzyme catalyses UMP + diphosphate = 5-phospho-alpha-D-ribose 1-diphosphate + uracil. It functions in the pathway pyrimidine metabolism; UMP biosynthesis via salvage pathway; UMP from uracil: step 1/1. Allosterically activated by GTP. In terms of biological role, catalyzes the conversion of uracil and 5-phospho-alpha-D-ribose 1-diphosphate (PRPP) to UMP and diphosphate. This is Uracil phosphoribosyltransferase from Myxococcus xanthus (strain DK1622).